Reading from the N-terminus, the 101-residue chain is Large ribosomal subunit protein uL24 (101 aa).

Belongs to the universal ribosomal protein uL24 family. In terms of assembly, part of the 50S ribosomal subunit.

One of two assembly initiator proteins, it binds directly to the 5'-end of the 23S rRNA, where it nucleates assembly of the 50S subunit. Functionally, one of the proteins that surrounds the polypeptide exit tunnel on the outside of the subunit. This chain is Large ribosomal subunit protein uL24, found in Streptococcus equi subsp. zooepidemicus (strain H70).